The chain runs to 123 residues: Large ribosomal subunit protein bL12 (123 aa).

Belongs to the bacterial ribosomal protein bL12 family. Homodimer. Part of the ribosomal stalk of the 50S ribosomal subunit. Forms a multimeric L10(L12)X complex, where L10 forms an elongated spine to which 2 to 4 L12 dimers bind in a sequential fashion. Binds GTP-bound translation factors.

Its function is as follows. Forms part of the ribosomal stalk which helps the ribosome interact with GTP-bound translation factors. Is thus essential for accurate translation. The sequence is that of Large ribosomal subunit protein bL12 from Chlorobium luteolum (strain DSM 273 / BCRC 81028 / 2530) (Pelodictyon luteolum).